A 322-amino-acid polypeptide reads, in one-letter code: Sideroflexin-1 (322 aa).

Ser-2 is modified (N-acetylserine). The Mitochondrial matrix portion of the chain corresponds to 2–102; that stretch reads SGELPPNINI…MSAQVPMNMT (101 aa). Residues 103–120 traverse the membrane as a helical segment; it reads ITGCMMTFYRTTPAVLFW. The Mitochondrial intermembrane portion of the chain corresponds to 121–146; it reads QWVNQSFNAVVNYTNRSGDAPLTVNE. The helical transmembrane segment at 147–167 threads the bilayer; sequence LGTAYVSATTGAVATALGLNA. The Mitochondrial matrix segment spans residues 168–174; sequence LTKRVSP. The chain crosses the membrane as a helical span at residues 175–195; it reads LVGRFVPFAAVAAANCINIPL. Residues 196 to 228 are Mitochondrial intermembrane-facing; it reads MRQRELKVGIPVTDENGNRLGESASAAKQAITQ. The chain crosses the membrane as a helical span at residues 229-249; sequence VVVSRILMAAPGMAIPPFIMN. At 250–266 the chain is on the mitochondrial matrix side; the sequence is TLEKKAFLKRFPWMSAP. A helical transmembrane segment spans residues 267 to 287; sequence VQVGIVGFCLVFATPLCCALF. Topologically, residues 288–322 are mitochondrial intermembrane; that stretch reads PQKSSMSVTSLEAELQARIRETYPELRRVYFNKGL.

It belongs to the sideroflexin family.

Its subcellular location is the mitochondrion inner membrane. It catalyses the reaction L-serine(in) = L-serine(out). The enzyme catalyses L-alanine(in) = L-alanine(out). The catalysed reaction is L-cysteine(in) = L-cysteine(out). Functionally, amino acid transporter importing serine, an essential substrate of the mitochondrial branch of the one-carbon pathway, into mitochondria. Mitochondrial serine is then converted to glycine and formate, which exits to the cytosol where it is used to generate the charged folates that serve as one-carbon donors. May also transport other amino acids including alanine and cysteine. This Ovis aries (Sheep) protein is Sideroflexin-1 (SFXN1).